The primary structure comprises 407 residues: Arginine biosynthesis bifunctional protein ArgJ (407 aa).

T155, K181, T192, E278, N402, and T407 together coordinate substrate. Catalysis depends on T192, which acts as the Nucleophile.

The protein belongs to the ArgJ family. Heterotetramer of two alpha and two beta chains.

It is found in the cytoplasm. The catalysed reaction is N(2)-acetyl-L-ornithine + L-glutamate = N-acetyl-L-glutamate + L-ornithine. It catalyses the reaction L-glutamate + acetyl-CoA = N-acetyl-L-glutamate + CoA + H(+). It participates in amino-acid biosynthesis; L-arginine biosynthesis; L-ornithine and N-acetyl-L-glutamate from L-glutamate and N(2)-acetyl-L-ornithine (cyclic): step 1/1. Its pathway is amino-acid biosynthesis; L-arginine biosynthesis; N(2)-acetyl-L-ornithine from L-glutamate: step 1/4. Its function is as follows. Catalyzes two activities which are involved in the cyclic version of arginine biosynthesis: the synthesis of N-acetylglutamate from glutamate and acetyl-CoA as the acetyl donor, and of ornithine by transacetylation between N(2)-acetylornithine and glutamate. This is Arginine biosynthesis bifunctional protein ArgJ from Thiobacillus denitrificans (strain ATCC 25259 / T1).